We begin with the raw amino-acid sequence, 608 residues long: Alpha-glycerophosphate oxidase (608 aa).

Asp-21–Glu-49 is an FAD binding site. A disordered region spans residues Ser-393–Leu-418.

The protein belongs to the FAD-dependent glycerol-3-phosphate dehydrogenase family. Requires FAD as cofactor.

The protein localises to the cell membrane. It carries out the reaction sn-glycerol 3-phosphate + O2 = dihydroxyacetone phosphate + H2O2. It participates in membrane lipid metabolism; glycerophospholipid metabolism. This is Alpha-glycerophosphate oxidase (glpO) from Streptococcus pneumoniae serotype 4 (strain ATCC BAA-334 / TIGR4).